The sequence spans 926 residues: DNA topoisomerase 3-alpha (926 aa).

The 145-residue stretch at 10 to 154 (TVLNVAEKPS…NLFIRRAHFS (145 aa)) folds into the Toprim domain. Mg(2+) is bound by residues Glu-16, Asp-123, and Asp-125. The 433-residue stretch at 172-604 (NQLFAEAVDA…CLQQMKACFL (433 aa)) folds into the Topo IA-type catalytic domain. Residues 219–224 (SYGPCQ) are interaction with DNA. The active-site O-(5'-phospho-DNA)-tyrosine intermediate is Tyr-342. The C4-type zinc finger occupies 642–670 (CNLCNESDMALRKNRDGNFMVGCMNYPQC). Disordered regions lie at residues 740–760 (SRSQ…QGSN) and 775–806 (HAST…TVSC). The segment covering 750 to 760 (TAPSNNIQGSN) has biased composition (polar residues). The CCHC-type 1 zinc-finger motif lies at 767–782 (CIHCQQRGHASTNCPS). Zn(2+) is bound by residues Cys-806, Cys-809, Cys-831, and Cys-836. The GRF-type zinc-finger motif lies at 806 to 845 (CNTCGSQCVLRTANTEANRGRQFFSCPTQGCSFFAWEDSI). The disordered stretch occupies residues 849-890 (SGNATTGSNSGGSGRRGSRGRGRGGRGGQSSGGRRGSGTSFV). Residues 873-884 (GRGGQSSGGRRG) are compositionally biased toward gly residues. Residues 901-917 (RCFSCGDPSHFANACPN) form a CCHC-type 2 zinc finger.

The protein belongs to the type IA topoisomerase family. In terms of assembly, component of the RMI complex, containing at least TOP3A and RMI1. The RMI complex interacts with RECQL4A. Mg(2+) serves as cofactor.

It catalyses the reaction ATP-independent breakage of single-stranded DNA, followed by passage and rejoining.. Functionally, releases the supercoiling and torsional tension of DNA introduced during the DNA replication and transcription by transiently cleaving and rejoining one strand of the DNA duplex. Introduces a single-strand break via transesterification at a target site in duplex DNA. The scissile phosphodiester is attacked by the catalytic tyrosine of the enzyme, resulting in the formation of a DNA-(5'-phosphotyrosyl)-enzyme intermediate and the expulsion of a 3'-OH DNA strand. The free DNA strand then undergoes passage around the unbroken strand thus removing DNA supercoils. Finally, in the religation step, the DNA 3'-OH attacks the covalent intermediate to expel the active-site tyrosine and restore the DNA phosphodiester backbone. Essential component of the RMI complex, a complex that plays an important role in the resolution step of homologous recombination, in a process called Holliday Junction dissolution, to limit DNA crossover formation in cells. Together with RMI1, is essential for the resolution of meiotic recombination intermediates, a step that prevents entanglement of the parental chromosomes. May have DNA decatenation activity. The chain is DNA topoisomerase 3-alpha (TOP3A) from Arabidopsis thaliana (Mouse-ear cress).